The primary structure comprises 157 residues: Cyclic pyranopterin monophosphate synthase (157 aa).

Substrate is bound by residues 74 to 76 (MCH) and 112 to 113 (ME). Asp-127 is a catalytic residue.

Belongs to the MoaC family. As to quaternary structure, homohexamer; trimer of dimers.

It catalyses the reaction (8S)-3',8-cyclo-7,8-dihydroguanosine 5'-triphosphate = cyclic pyranopterin phosphate + diphosphate. It functions in the pathway cofactor biosynthesis; molybdopterin biosynthesis. Catalyzes the conversion of (8S)-3',8-cyclo-7,8-dihydroguanosine 5'-triphosphate to cyclic pyranopterin monophosphate (cPMP). This chain is Cyclic pyranopterin monophosphate synthase, found in Campylobacter jejuni subsp. jejuni serotype O:6 (strain 81116 / NCTC 11828).